The primary structure comprises 335 residues: Acetyl-coenzyme A carboxylase carboxyl transferase subunit alpha (335 aa).

Residues 38 to 292 (TLEQKAEELR…ATALSEEIEN (255 aa)) form the CoA carboxyltransferase C-terminal domain.

This sequence belongs to the AccA family. In terms of assembly, acetyl-CoA carboxylase is a heterohexamer composed of biotin carboxyl carrier protein (AccB), biotin carboxylase (AccC) and two subunits each of ACCase subunit alpha (AccA) and ACCase subunit beta (AccD).

It is found in the cytoplasm. The catalysed reaction is N(6)-carboxybiotinyl-L-lysyl-[protein] + acetyl-CoA = N(6)-biotinyl-L-lysyl-[protein] + malonyl-CoA. It functions in the pathway lipid metabolism; malonyl-CoA biosynthesis; malonyl-CoA from acetyl-CoA: step 1/1. In terms of biological role, component of the acetyl coenzyme A carboxylase (ACC) complex. First, biotin carboxylase catalyzes the carboxylation of biotin on its carrier protein (BCCP) and then the CO(2) group is transferred by the carboxyltransferase to acetyl-CoA to form malonyl-CoA. The chain is Acetyl-coenzyme A carboxylase carboxyl transferase subunit alpha from Heliobacterium modesticaldum (strain ATCC 51547 / Ice1).